Here is a 291-residue protein sequence, read N- to C-terminus: 4-hydroxy-tetrahydrodipicolinate synthase (291 aa).

T45 lines the pyruvate pocket. The active-site Proton donor/acceptor is Y133. The active-site Schiff-base intermediate with substrate is K161. I203 contacts pyruvate.

This sequence belongs to the DapA family. Homotetramer; dimer of dimers.

It is found in the cytoplasm. It catalyses the reaction L-aspartate 4-semialdehyde + pyruvate = (2S,4S)-4-hydroxy-2,3,4,5-tetrahydrodipicolinate + H2O + H(+). The protein operates within amino-acid biosynthesis; L-lysine biosynthesis via DAP pathway; (S)-tetrahydrodipicolinate from L-aspartate: step 3/4. Catalyzes the condensation of (S)-aspartate-beta-semialdehyde [(S)-ASA] and pyruvate to 4-hydroxy-tetrahydrodipicolinate (HTPA). The polypeptide is 4-hydroxy-tetrahydrodipicolinate synthase (Acidithiobacillus ferrooxidans (strain ATCC 23270 / DSM 14882 / CIP 104768 / NCIMB 8455) (Ferrobacillus ferrooxidans (strain ATCC 23270))).